The sequence spans 140 residues: Ig heavy chain V region 93G7 (140 aa).

The N-terminal stretch at 1-19 is a signal peptide; sequence MGWSFIFLFLLSVTAGVHS. Residues 20–139 enclose the Ig-like domain; the sequence is EVQLQQSGAE…WGQGTPLTVS (120 aa).

The sequence is that of Ig heavy chain V region 93G7 from Mus musculus (Mouse).